A 227-amino-acid chain; its full sequence is Uridylate kinase (227 aa).

11 to 12 is an ATP binding site; it reads GS. Residue glycine 45 participates in UMP binding. ATP-binding residues include glycine 46 and arginine 50. UMP is bound by residues aspartate 67 and 114 to 120; that span reads TEPGHTT. Residues threonine 140, tyrosine 146, and aspartate 149 each coordinate ATP.

The protein belongs to the UMP kinase family. As to quaternary structure, homohexamer.

It is found in the cytoplasm. The catalysed reaction is UMP + ATP = UDP + ADP. Its pathway is pyrimidine metabolism; CTP biosynthesis via de novo pathway; UDP from UMP (UMPK route): step 1/1. With respect to regulation, inhibited by UTP. Its function is as follows. Catalyzes the reversible phosphorylation of UMP to UDP. This is Uridylate kinase from Thermoplasma volcanium (strain ATCC 51530 / DSM 4299 / JCM 9571 / NBRC 15438 / GSS1).